The primary structure comprises 152 residues: Nucleoside diphosphate kinase B (152 aa).

The tract at residues 1–66 (MAHQERTFIA…DRPFYPGLVK (66 aa)) is interaction with AKAP13. Lys12, Phe60, Arg88, Thr94, Arg105, and Asn115 together coordinate ATP. The active-site Pros-phosphohistidine intermediate is His118.

It belongs to the NDK family. Hexamer of two different chains: An and B (A6, A5B, A4B2, A3B3, A2B4, AB5, B6). Interacts with CAPN8. Interacts with AKAP13. Interacts with ITGB1BP1 (via C-terminal domain region). Interacts with BCL2L10. Mg(2+) serves as cofactor. In terms of tissue distribution, ubiquitous.

It localises to the cytoplasm. It is found in the cell projection. The protein localises to the lamellipodium. Its subcellular location is the ruffle. The protein resides in the nucleus. The catalysed reaction is a 2'-deoxyribonucleoside 5'-diphosphate + ATP = a 2'-deoxyribonucleoside 5'-triphosphate + ADP. It carries out the reaction a ribonucleoside 5'-diphosphate + ATP = a ribonucleoside 5'-triphosphate + ADP. The enzyme catalyses ATP + protein L-histidine = ADP + protein N-phospho-L-histidine.. Its function is as follows. Major role in the synthesis of nucleoside triphosphates other than ATP. The ATP gamma phosphate is transferred to the NDP beta phosphate via a ping-pong mechanism, using a phosphorylated active-site intermediate. Negatively regulates Rho activity by interacting with AKAP13/LBC. Acts as a transcriptional activator of the MYC gene; binds DNA non-specifically. Binds to both single-stranded guanine- and cytosine-rich strands within the nuclease hypersensitive element (NHE) III(1) region of the MYC gene promoter. Does not bind to duplex NHE III(1). Has G-quadruplex (G4) DNA-binding activity, which is independent of its nucleotide-binding and kinase activity. Binds both folded and unfolded G4 with similar low nanomolar affinities. Stabilizes folded G4s regardless of whether they are prefolded or not. Exhibits histidine protein kinase activity. This chain is Nucleoside diphosphate kinase B (NME2), found in Canis lupus familiaris (Dog).